The chain runs to 662 residues: p-hydroxybenzoic acid efflux pump subunit AaeB (662 aa).

The next 11 membrane-spanning stretches (helical) occupy residues 22 to 42 (FAFKLTFAVVLSLFLGFHLQL), 52 to 72 (AAIVAGGPAFVAGGEPFSGAI), 78 to 98 (LRIVGTFIGCIGALAIIISTI), 102 to 122 (IVMMLLCCIWAGLCNWISSLV), 129 to 149 (IFGLAGYTTLIIILATQGTPM), 161 to 181 (EIVLGIACVIFADLLFAPRSI), 378 to 398 (LFWLSTGWSSGGICMMMIAVV), 415 to 435 (FLYGTIYSLPLGALMFMFILP), 439 to 459 (QSILLLCLSLGAMTFFLGVEV), 467 to 487 (LGALISTINVLLLNNPMTFNI), and 491 to 511 (LDNAIGQIIGCFVALMVILLI).

Belongs to the aromatic acid exporter ArAE (TC 2.A.85) family.

The protein resides in the cell inner membrane. Forms an efflux pump with AaeA. Could function as a metabolic relief valve, allowing to eliminate certain compounds when they accumulate to high levels in the cell. This chain is p-hydroxybenzoic acid efflux pump subunit AaeB, found in Pectobacterium parmentieri (strain WPP163) (Pectobacterium wasabiae (strain WPP163)).